Reading from the N-terminus, the 207-residue chain is Putative 3-methyladenine DNA glycosylase (207 aa).

This sequence belongs to the DNA glycosylase MPG family.

The chain is Putative 3-methyladenine DNA glycosylase from Koribacter versatilis (strain Ellin345).